Here is a 313-residue protein sequence, read N- to C-terminus: Cilia- and flagella-associated protein 36 (313 aa).

Phosphoserine occurs at positions 85 and 147. Positions 147–187 (SDLEQEEMKILKEVLRKSKEEYDQEEERKRKKQLSEAKTEE) form a coiled coil. Disordered stretches follow at residues 165-204 (KEEY…SQGD) and 262-292 (KIKQ…TAEE). Basic and acidic residues predominate over residues 179–189 (QLSEAKTEEHP). Positions 192–203 (ANETAKMSNSQG) are enriched in polar residues. A Phosphoserine modification is found at Ser-201. A compositionally biased stretch (basic and acidic residues) spans 271–292 (QKGKPAGEVEEMTEKPEMTAEE).

This sequence belongs to the CFAP36 family. In terms of assembly, interacts with ARL3.

It is found in the nucleus. The protein localises to the cytoplasm. The protein resides in the cell projection. Its subcellular location is the cilium. It localises to the flagellum. In terms of biological role, may act as an effector for ARL3. This is Cilia- and flagella-associated protein 36 from Bos taurus (Bovine).